We begin with the raw amino-acid sequence, 820 residues long: Phenylalanine--tRNA ligase beta subunit (820 aa).

A tRNA-binding domain is found at 42 to 154 (KGGLEGLVIG…EDAVPGTLAK (113 aa)). The B5 domain occupies 413–489 (AQDFIVELTY…RIYGYNNVEI (77 aa)). 4 residues coordinate Mg(2+): Asp467, Asp473, Glu476, and Asp477. Residues 727-820 (SKFPAVKRDL…LEDKLGAKLR (94 aa)) form the FDX-ACB domain.

It belongs to the phenylalanyl-tRNA synthetase beta subunit family. Type 1 subfamily. Tetramer of two alpha and two beta subunits. It depends on Mg(2+) as a cofactor.

It localises to the cytoplasm. The enzyme catalyses tRNA(Phe) + L-phenylalanine + ATP = L-phenylalanyl-tRNA(Phe) + AMP + diphosphate + H(+). This Bacteroides fragilis (strain YCH46) protein is Phenylalanine--tRNA ligase beta subunit.